The following is a 179-amino-acid chain: Acireductone dioxygenase (179 aa).

The segment at 1–23 (MVQAWYMDESTADPRMPHRAQPD) is disordered. Fe(2+) is bound by residues H88, H90, E94, and H133. The Ni(2+) site is built by H88, H90, E94, and H133.

The protein belongs to the acireductone dioxygenase (ARD) family. In terms of assembly, monomer. Interacts with MMP14. Fe(2+) is required as a cofactor. Requires Ni(2+) as cofactor. In terms of tissue distribution, detected in prostate, liver, heart, brain, muscle, kidney and seminal vesicles.

It localises to the cytoplasm. It is found in the nucleus. Its subcellular location is the cell membrane. The catalysed reaction is 1,2-dihydroxy-5-(methylsulfanyl)pent-1-en-3-one + O2 = 4-methylsulfanyl-2-oxobutanoate + formate + 2 H(+). It catalyses the reaction 1,2-dihydroxy-5-(methylsulfanyl)pent-1-en-3-one + O2 = 3-(methylsulfanyl)propanoate + CO + formate + 2 H(+). It participates in amino-acid biosynthesis; L-methionine biosynthesis via salvage pathway; L-methionine from S-methyl-5-thio-alpha-D-ribose 1-phosphate: step 5/6. Its function is as follows. Catalyzes 2 different reactions between oxygen and the acireductone 1,2-dihydroxy-3-keto-5-methylthiopentene (DHK-MTPene) depending upon the metal bound in the active site. Fe-containing acireductone dioxygenase (Fe-ARD) produces formate and 2-keto-4-methylthiobutyrate (KMTB), the alpha-ketoacid precursor of methionine in the methionine recycle pathway. Ni-containing acireductone dioxygenase (Ni-ARD) produces methylthiopropionate, carbon monoxide and formate, and does not lie on the methionine recycle pathway. Also down-regulates cell migration mediated by MMP14. The protein is Acireductone dioxygenase (Adi1) of Rattus norvegicus (Rat).